Reading from the N-terminus, the 377-residue chain is 3-dehydroquinate synthase (377 aa).

NAD(+) contacts are provided by residues 113-117, 137-138, Lys-150, Lys-159, and 177-180; these read GVIGD, TT, and FLDT. Positions 192, 254, and 273 each coordinate Zn(2+).

This sequence belongs to the sugar phosphate cyclases superfamily. Dehydroquinate synthase family. Requires Co(2+) as cofactor. Zn(2+) is required as a cofactor. It depends on NAD(+) as a cofactor.

It localises to the cytoplasm. The enzyme catalyses 7-phospho-2-dehydro-3-deoxy-D-arabino-heptonate = 3-dehydroquinate + phosphate. Its pathway is metabolic intermediate biosynthesis; chorismate biosynthesis; chorismate from D-erythrose 4-phosphate and phosphoenolpyruvate: step 2/7. In terms of biological role, catalyzes the conversion of 3-deoxy-D-arabino-heptulosonate 7-phosphate (DAHP) to dehydroquinate (DHQ). In Bartonella quintana (strain Toulouse) (Rochalimaea quintana), this protein is 3-dehydroquinate synthase.